The chain runs to 336 residues: Foldase protein PrsA (336 aa).

A signal peptide spans 1–22 (MKSAKKLLSVLCLGIFILTFTA). Cysteine 23 is lipidated: N-palmitoyl cysteine. The S-diacylglycerol cysteine moiety is linked to residue cysteine 23. The region spanning 194–286 (PNTMNVSHIL…WGYHIIKINS (93 aa)) is the PpiC domain.

The protein belongs to the PrsA family.

It localises to the cell membrane. It carries out the reaction [protein]-peptidylproline (omega=180) = [protein]-peptidylproline (omega=0). In terms of biological role, plays a major role in protein secretion by helping the post-translocational extracellular folding of several secreted proteins. This is Foldase protein PrsA from Clostridium botulinum (strain Langeland / NCTC 10281 / Type F).